Consider the following 355-residue polypeptide: Uroporphyrinogen decarboxylase (355 aa).

Substrate contacts are provided by residues 27–31, aspartate 77, tyrosine 154, threonine 209, and histidine 327; that span reads RQAGR.

It belongs to the uroporphyrinogen decarboxylase family. As to quaternary structure, homodimer.

Its subcellular location is the cytoplasm. It catalyses the reaction uroporphyrinogen III + 4 H(+) = coproporphyrinogen III + 4 CO2. It functions in the pathway porphyrin-containing compound metabolism; protoporphyrin-IX biosynthesis; coproporphyrinogen-III from 5-aminolevulinate: step 4/4. In terms of biological role, catalyzes the decarboxylation of four acetate groups of uroporphyrinogen-III to yield coproporphyrinogen-III. The polypeptide is Uroporphyrinogen decarboxylase (Erwinia tasmaniensis (strain DSM 17950 / CFBP 7177 / CIP 109463 / NCPPB 4357 / Et1/99)).